The following is a 367-amino-acid chain: Aminomethyltransferase (367 aa).

This sequence belongs to the GcvT family. In terms of assembly, the glycine cleavage system is composed of four proteins: P, T, L and H.

The enzyme catalyses N(6)-[(R)-S(8)-aminomethyldihydrolipoyl]-L-lysyl-[protein] + (6S)-5,6,7,8-tetrahydrofolate = N(6)-[(R)-dihydrolipoyl]-L-lysyl-[protein] + (6R)-5,10-methylene-5,6,7,8-tetrahydrofolate + NH4(+). The glycine cleavage system catalyzes the degradation of glycine. In Mycobacterium leprae (strain Br4923), this protein is Aminomethyltransferase.